Here is a 406-residue protein sequence, read N- to C-terminus: MQAVERPVQTTDSLVDTTIHRRKTRAVKVGNVTIGSDYPVVVQSMINEDTLDIEGSVAAIRRLHEIGCEIVRVTVPSMAHARSLAQIKAKLAETYQAVPIVADVHHNGMKIALEVAKHVDKVRINPGLYVFEQASGDRTGYTEAEFAAIGEKIRETLEPLVVSLRDQGKAMRIGVNHGSLAERMLFTYGDTPEGMVESALEFIRICQSLDFHNLIISMKASRVPVMLAAYRLMAKRMDELGMDYPLHLGVTEAGDGEYGRIKSTAGIGTLLAEGIGDTIRVSLTEAPEKEIPVCYSILQALGLRKTMVEYVACPSCGRTLFNLEEVLHKVREATNHLTGLDIAVMGCIVNGPGEMADADYGYVGKTPGVISLYRGREEIRKVPEAQGVEELINLIKADGRWVDPPQ.

[4Fe-4S] cluster contacts are provided by Cys-313, Cys-316, Cys-347, and Glu-354.

This sequence belongs to the IspG family. [4Fe-4S] cluster serves as cofactor.

The enzyme catalyses (2E)-4-hydroxy-3-methylbut-2-enyl diphosphate + 2 oxidized [2Fe-2S]-[ferredoxin] + H2O = 2-C-methyl-D-erythritol 2,4-cyclic diphosphate + 2 reduced [2Fe-2S]-[ferredoxin] + H(+). It functions in the pathway isoprenoid biosynthesis; isopentenyl diphosphate biosynthesis via DXP pathway; isopentenyl diphosphate from 1-deoxy-D-xylulose 5-phosphate: step 5/6. Functionally, converts 2C-methyl-D-erythritol 2,4-cyclodiphosphate (ME-2,4cPP) into 1-hydroxy-2-methyl-2-(E)-butenyl 4-diphosphate. The polypeptide is 4-hydroxy-3-methylbut-2-en-1-yl diphosphate synthase (ferredoxin) (Picosynechococcus sp. (strain ATCC 27264 / PCC 7002 / PR-6) (Agmenellum quadruplicatum)).